The chain runs to 504 residues: MYRCASSRLSSLKARQGNRVLTRFSSSAAVATKPSGGLFSWITGDTSSSVTPLDFPLNDVKLSPPLPDYVEPAKTQITTLANGLKVASEASVNPAASIGLYVDCGSIYETPASYGATHLLERMAFKSTLNRSHLRIVREIEAIGGNVTASASREHMIYTYDALKTYVPQMVEMLADCVRNPAFLDWEVKEQLEKVKAEISEYSKNPQHLLLEAVHSAGYAGPYGNSLMATEATINRLNSTVLEEFVAENYTAPRMVLAASGVEHEEFLKVAEPLLSDLPKVATIEEPKPVYVGGDYRCQADAEMTHFALAFEVPGGWMSEKESMTLTVLQMLMGGGGSFSAGGPGKGMYSRLYLRVLNQYPQIHAFSAFSSIYNNTGLFGIQGTTSSDFGPQAVDVAVKELIAVANPSEVDQVQLNRAKQATKSAILMNLESRMVASEDIGRQLLTYGERNPVEHFLKAIDAVSAKDIASVVQKLISSPLTMASYGDVLSLPSYDAVSSRFRSK.

Belongs to the peptidase M16 family. As to quaternary structure, heterodimer of alpha and beta subunits, forming the mitochondrial processing protease (MPP) in which subunit alpha is involved in substrate recognition and binding and subunit beta is the catalytic subunit.

It localises to the mitochondrion inner membrane. It catalyses the reaction a quinol + 2 Fe(III)-[cytochrome c](out) = a quinone + 2 Fe(II)-[cytochrome c](out) + 2 H(+)(out). Functionally, substrate recognition and binding subunit of the essential mitochondrial processing protease (MPP), which cleaves the mitochondrial sequence off newly imported precursors proteins. In terms of biological role, this is a component of the ubiquinol-cytochrome c reductase complex (complex III or cytochrome b-c1 complex), which is part of the mitochondrial respiratory chain. Mediates formation of the complex between cytochromes c and c1. This chain is Mitochondrial-processing peptidase subunit alpha (MPP), found in Solanum tuberosum (Potato).